The sequence spans 835 residues: Probable alpha-glucuronidase A (835 aa).

The first 18 residues, 1 to 18 (MRWSFLTVLLWLVSLTGA), serve as a signal peptide directing secretion. Residues N49, N101, N148, N221, N278, N309, N342, N460, N522, N571, N677, and N727 are each glycosylated (N-linked (GlcNAc...) asparagine).

The protein belongs to the glycosyl hydrolase 67 family.

It is found in the secreted. The enzyme catalyses an alpha-D-glucuronoside + H2O = D-glucuronate + an alcohol. In terms of biological role, alpha-glucuronidase involved in the hydrolysis of xylan, a major structural heterogeneous polysaccharide found in plant biomass representing the second most abundant polysaccharide in the biosphere, after cellulose. Releases 4-O-methylglucuronic acid from xylan. The chain is Probable alpha-glucuronidase A (aguA) from Aspergillus oryzae (strain ATCC 42149 / RIB 40) (Yellow koji mold).